The following is a 333-amino-acid chain: GTP 3',8-cyclase (333 aa).

The 215-residue stretch at 7–221 folds into the Radical SAM core domain; it reads KFGRVHDYIR…FEACDAIGFE (215 aa). Residue Arg-16 participates in GTP binding. [4Fe-4S] cluster is bound by residues Cys-23 and Cys-27. Tyr-29 contributes to the S-adenosyl-L-methionine binding site. Cys-30 lines the [4Fe-4S] cluster pocket. Arg-66 is a GTP binding site. Gly-70 lines the S-adenosyl-L-methionine pocket. Thr-97 contributes to the GTP binding site. Residue Ser-121 coordinates S-adenosyl-L-methionine. GTP is bound at residue Lys-158. Residue Met-192 participates in S-adenosyl-L-methionine binding. [4Fe-4S] cluster-binding residues include Cys-257 and Cys-260. GTP is bound at residue 262–264; the sequence is RLR. Residue Cys-274 participates in [4Fe-4S] cluster binding.

The protein belongs to the radical SAM superfamily. MoaA family. As to quaternary structure, monomer and homodimer. [4Fe-4S] cluster serves as cofactor.

The catalysed reaction is GTP + AH2 + S-adenosyl-L-methionine = (8S)-3',8-cyclo-7,8-dihydroguanosine 5'-triphosphate + 5'-deoxyadenosine + L-methionine + A + H(+). It participates in cofactor biosynthesis; molybdopterin biosynthesis. Its function is as follows. Catalyzes the cyclization of GTP to (8S)-3',8-cyclo-7,8-dihydroguanosine 5'-triphosphate. This is GTP 3',8-cyclase from Listeria welshimeri serovar 6b (strain ATCC 35897 / DSM 20650 / CCUG 15529 / CIP 8149 / NCTC 11857 / SLCC 5334 / V8).